We begin with the raw amino-acid sequence, 507 residues long: Arylsulfatase A (507 aa).

Positions 1 to 18 are cleaved as a signal peptide; sequence MGAPRSLLLALAAGLAVA. Asp-29, Asp-30, and Cys-69 together coordinate Ca(2+). Residue Cys-69 is the Nucleophile of the active site. Cys-69 carries the post-translational modification 3-oxoalanine (Cys). Lys-123 is a substrate binding site. Residue His-125 is part of the active site. Position 150 (Ser-150) interacts with substrate. 2 cysteine pairs are disulfide-bonded: Cys-156–Cys-172 and Cys-161–Cys-168. N-linked (GlcNAc...) asparagine glycosylation is present at Asn-158. Asn-184 carries an N-linked (GlcNAc...) asparagine glycan. His-229 lines the substrate pocket. Ca(2+)-binding residues include Asp-281 and Asn-282. Intrachain disulfides connect Cys-300–Cys-414, Cys-488–Cys-500, Cys-489–Cys-502, and Cys-493–Cys-499. Lys-302 contributes to the substrate binding site. An N-linked (GlcNAc...) asparagine glycan is attached at Asn-350.

It belongs to the sulfatase family. Homodimer at neutral pH and homooctamer at acidic pH. Exists both as a single chain of 58 kDa (component A) or as a chain of 50 kDa (component B) linked by disulfide bond(s) to a 7 kDa chain (component C). Interacts with SUMF1. It depends on Ca(2+) as a cofactor. Post-translationally, the conversion to 3-oxoalanine (also known as C-formylglycine, FGly), of a serine or cysteine residue in prokaryotes and of a cysteine residue in eukaryotes, is critical for catalytic activity. This post-translational modification is severely defective in multiple sulfatase deficiency (MSD).

It localises to the endoplasmic reticulum. The protein resides in the lysosome. It carries out the reaction an N-acyl-1-beta-D-(3-O-sulfo)-galactosyl-sphing-4-enine + H2O = a beta-D-galactosyl-(1&lt;-&gt;1')-N-acylsphing-4-enine + sulfate + H(+). Inhibited by phosphate. The phosphate forms a covalent bond with the active site 3-oxoalanine. In terms of biological role, hydrolyzes cerebroside sulfate. The sequence is that of Arylsulfatase A (ARSA) from Homo sapiens (Human).